We begin with the raw amino-acid sequence, 68 residues long: MELYREYPAWLIFLRRTYAVAAGVLALPFMLFWKDRARFYSYLHRVWSKTSDKPVWMDQAEKATGDFY.

A signal peptide spans 1–21 (MELYREYPAWLIFLRRTYAVA).

This is an uncharacterized protein from Escherichia coli O157:H7.